The sequence spans 469 residues: UDP-glycosyltransferase 75B1 (469 aa).

Catalysis depends on histidine 16, which acts as the Proton acceptor. Histidine 16 contacts an anthocyanidin. The UDP-alpha-D-glucose site is built by glutamine 334, histidine 349, tryptophan 352, serine 354, glutamate 357, aspartate 373, and glutamine 374.

Belongs to the UDP-glycosyltransferase family. In terms of assembly, interacts with CALS1, ROP1 and phragmoplastin.

The protein resides in the cytoplasm. It localises to the perinuclear region. It is found in the cytoskeleton. Its subcellular location is the phragmoplast. It catalyses the reaction (indol-3-yl)acetate + UDP-alpha-D-glucose = 1-O-(indol-3-ylacetyl)-beta-D-glucose + UDP. The protein operates within plant hormone metabolism; auxin conjugation. Possesses low catalytic activity on indole-3-acetic acid (IAA) in vitro. May transfer UDP-glucose from sucrose synthase to callose synthase for the synthesis of callose at the forming cell plate during cytokinesis. Has high affinity for 4-aminobenzoate. Catalyzes the formation of 4-aminobenzoate glucose ester which represents a storage form of 4-aminobenzoate in the vacuole. Is the major source of this activity in the plant. Also active in vitro on benzoates and benzoate derivatives. The chain is UDP-glycosyltransferase 75B1 (UGT75B1) from Arabidopsis thaliana (Mouse-ear cress).